A 39-amino-acid chain; its full sequence is Photosystem II reaction center protein L (39 aa).

A helical membrane pass occupies residues 18–38; that stretch reads SLYLGLLLVAVLGILFSSYFF.

The protein belongs to the PsbL family. PSII is composed of 1 copy each of membrane proteins PsbA, PsbB, PsbC, PsbD, PsbE, PsbF, PsbH, PsbI, PsbJ, PsbK, PsbL, PsbM, PsbT, PsbX, PsbY, PsbZ, Psb30/Ycf12, peripheral proteins PsbO, CyanoQ (PsbQ), PsbU, PsbV and a large number of cofactors. It forms dimeric complexes.

The protein resides in the cellular thylakoid membrane. Its function is as follows. One of the components of the core complex of photosystem II (PSII). PSII is a light-driven water:plastoquinone oxidoreductase that uses light energy to abstract electrons from H(2)O, generating O(2) and a proton gradient subsequently used for ATP formation. It consists of a core antenna complex that captures photons, and an electron transfer chain that converts photonic excitation into a charge separation. This subunit is found at the monomer-monomer interface and is required for correct PSII assembly and/or dimerization. This Microcystis aeruginosa (strain NIES-843 / IAM M-2473) protein is Photosystem II reaction center protein L.